Consider the following 83-residue polypeptide: Cytochrome b559 subunit alpha (83 aa).

A helical transmembrane segment spans residues 21–35; sequence VIHSITIPSLFIAGW. A heme-binding site is contributed by H23.

This sequence belongs to the PsbE/PsbF family. As to quaternary structure, heterodimer of an alpha subunit and a beta subunit. PSII is composed of 1 copy each of membrane proteins PsbA, PsbB, PsbC, PsbD, PsbE, PsbF, PsbH, PsbI, PsbJ, PsbK, PsbL, PsbM, PsbT, PsbX, PsbY, PsbZ, Psb30/Ycf12, at least 3 peripheral proteins of the oxygen-evolving complex and a large number of cofactors. It forms dimeric complexes. Heme b is required as a cofactor.

The protein localises to the plastid. Its subcellular location is the chloroplast thylakoid membrane. This b-type cytochrome is tightly associated with the reaction center of photosystem II (PSII). PSII is a light-driven water:plastoquinone oxidoreductase that uses light energy to abstract electrons from H(2)O, generating O(2) and a proton gradient subsequently used for ATP formation. It consists of a core antenna complex that captures photons, and an electron transfer chain that converts photonic excitation into a charge separation. This chain is Cytochrome b559 subunit alpha, found in Huperzia lucidula (Shining clubmoss).